Here is a 207-residue protein sequence, read N- to C-terminus: Small ribosomal subunit protein uS4 (207 aa).

Residues 96–156 (SRLDNVVYRM…KKSHNQSRIY (61 aa)) form the S4 RNA-binding domain.

The protein belongs to the universal ribosomal protein uS4 family. In terms of assembly, part of the 30S ribosomal subunit. Contacts protein S5. The interaction surface between S4 and S5 is involved in control of translational fidelity.

One of the primary rRNA binding proteins, it binds directly to 16S rRNA where it nucleates assembly of the body of the 30S subunit. Functionally, with S5 and S12 plays an important role in translational accuracy. The sequence is that of Small ribosomal subunit protein uS4 from Blochmanniella floridana.